We begin with the raw amino-acid sequence, 116 residues long: Large ribosomal subunit protein bL19 (116 aa).

It belongs to the bacterial ribosomal protein bL19 family.

Functionally, this protein is located at the 30S-50S ribosomal subunit interface and may play a role in the structure and function of the aminoacyl-tRNA binding site. The chain is Large ribosomal subunit protein bL19 from Pseudothermotoga lettingae (strain ATCC BAA-301 / DSM 14385 / NBRC 107922 / TMO) (Thermotoga lettingae).